Consider the following 273-residue polypeptide: 4-hydroxy-tetrahydrodipicolinate reductase (273 aa).

Residues 11-16 (GATGKM) and 106-108 (GTT) each bind NAD(+). H162 functions as the Proton donor/acceptor in the catalytic mechanism. H163 is a (S)-2,3,4,5-tetrahydrodipicolinate binding site. The active-site Proton donor is the K166. 172-173 (GT) serves as a coordination point for (S)-2,3,4,5-tetrahydrodipicolinate.

The protein belongs to the DapB family.

The protein resides in the cytoplasm. It catalyses the reaction (S)-2,3,4,5-tetrahydrodipicolinate + NAD(+) + H2O = (2S,4S)-4-hydroxy-2,3,4,5-tetrahydrodipicolinate + NADH + H(+). It carries out the reaction (S)-2,3,4,5-tetrahydrodipicolinate + NADP(+) + H2O = (2S,4S)-4-hydroxy-2,3,4,5-tetrahydrodipicolinate + NADPH + H(+). It functions in the pathway amino-acid biosynthesis; L-lysine biosynthesis via DAP pathway; (S)-tetrahydrodipicolinate from L-aspartate: step 4/4. Functionally, catalyzes the conversion of 4-hydroxy-tetrahydrodipicolinate (HTPA) to tetrahydrodipicolinate. The sequence is that of 4-hydroxy-tetrahydrodipicolinate reductase from Synechococcus elongatus (strain ATCC 33912 / PCC 7942 / FACHB-805) (Anacystis nidulans R2).